The following is a 447-amino-acid chain: Kynurenine 3-monooxygenase (447 aa).

This sequence belongs to the aromatic-ring hydroxylase family. KMO subfamily. Requires FAD as cofactor.

The catalysed reaction is L-kynurenine + NADPH + O2 + H(+) = 3-hydroxy-L-kynurenine + NADP(+) + H2O. Its pathway is cofactor biosynthesis; NAD(+) biosynthesis; quinolinate from L-kynurenine: step 1/3. Its function is as follows. Catalyzes the hydroxylation of L-kynurenine (L-Kyn) to form 3-hydroxy-L-kynurenine (L-3OHKyn). Required for synthesis of quinolinic acid. The chain is Kynurenine 3-monooxygenase from Christiangramia forsetii (strain DSM 17595 / CGMCC 1.15422 / KT0803) (Gramella forsetii).